The sequence spans 141 residues: ATP synthase F(0) complex subunit C2, mitochondrial (141 aa).

The N-terminal 66 residues, 1-66 (MFACSKFVST…RSFQTSAISR (66 aa)), are a transit peptide targeting the mitochondrion. The chain crosses the membrane as a helical span at residues 82–102 (VGVAGSGAGIGTVFGSLIIGY). Residue K109 is modified to N6,N6,N6-trimethyllysine. A helical transmembrane segment spans residues 117–137 (ILGFALSEAMGLFCLMVAFLI).

This sequence belongs to the ATPase C chain family. In terms of assembly, F-type ATPases have 2 components, CF(1) - the catalytic core - and CF(0) - the membrane proton channel. CF(1) has five subunits: alpha(3), beta(3), gamma(1), delta(1), epsilon(1). CF(0) has three main subunits: a, b and c. Interacts with DNAJC30; interaction is direct. Trimethylated by ATPSCKMT at Lys-109. Methylation is required for proper incorporation of the C subunit into the ATP synthase complex and mitochondrial respiration.

The protein localises to the mitochondrion membrane. Mitochondrial membrane ATP synthase (F(1)F(0) ATP synthase or Complex V) produces ATP from ADP in the presence of a proton gradient across the membrane which is generated by electron transport complexes of the respiratory chain. F-type ATPases consist of two structural domains, F(1) - containing the extramembraneous catalytic core and F(0) - containing the membrane proton channel, linked together by a central stalk and a peripheral stalk. During catalysis, ATP synthesis in the catalytic domain of F(1) is coupled via a rotary mechanism of the central stalk subunits to proton translocation. Part of the complex F(0) domain. A homomeric c-ring of probably 10 subunits is part of the complex rotary element. This chain is ATP synthase F(0) complex subunit C2, mitochondrial, found in Homo sapiens (Human).